The following is a 233-amino-acid chain: Large ribosomal subunit protein uL1 (233 aa).

The protein belongs to the universal ribosomal protein uL1 family. Part of the 50S ribosomal subunit.

Binds directly to 23S rRNA. The L1 stalk is quite mobile in the ribosome, and is involved in E site tRNA release. In terms of biological role, protein L1 is also a translational repressor protein, it controls the translation of the L11 operon by binding to its mRNA. This is Large ribosomal subunit protein uL1 from Campylobacter curvus (strain 525.92).